The following is a 447-amino-acid chain: 3-phosphoshikimate 1-carboxyvinyltransferase (447 aa).

The tract at residues Met1–Gly22 is disordered. 3-phosphoshikimate is bound by residues Lys30, Ser31, and Arg35. A phosphoenolpyruvate-binding site is contributed by Lys30. Phosphoenolpyruvate is bound by residues Gly102 and Arg130. The 3-phosphoshikimate site is built by Ser173, Gln175, Asp325, and Lys352. Gln175 serves as a coordination point for phosphoenolpyruvate. The active-site Proton acceptor is Asp325. Phosphoenolpyruvate is bound by residues Arg356 and Arg401.

It belongs to the EPSP synthase family. Monomer.

The protein resides in the cytoplasm. It catalyses the reaction 3-phosphoshikimate + phosphoenolpyruvate = 5-O-(1-carboxyvinyl)-3-phosphoshikimate + phosphate. It participates in metabolic intermediate biosynthesis; chorismate biosynthesis; chorismate from D-erythrose 4-phosphate and phosphoenolpyruvate: step 6/7. Functionally, catalyzes the transfer of the enolpyruvyl moiety of phosphoenolpyruvate (PEP) to the 5-hydroxyl of shikimate-3-phosphate (S3P) to produce enolpyruvyl shikimate-3-phosphate and inorganic phosphate. This chain is 3-phosphoshikimate 1-carboxyvinyltransferase, found in Maricaulis maris (strain MCS10) (Caulobacter maris).